Reading from the N-terminus, the 276-residue chain is uncharacterized protein (276 aa).

The N-terminal stretch at 1–16 (MELGLILMFASAFVSA) is a signal peptide. An N-linked (GlcNAc...) asparagine glycan is attached at asparagine 265.

This is an uncharacterized protein from Encephalitozoon cuniculi (strain GB-M1) (Microsporidian parasite).